We begin with the raw amino-acid sequence, 460 residues long: UDP-N-acetylmuramoylalanine--D-glutamate ligase (460 aa).

120–126 (GSNGKTT) is a binding site for ATP.

It belongs to the MurCDEF family.

The protein resides in the cytoplasm. It catalyses the reaction UDP-N-acetyl-alpha-D-muramoyl-L-alanine + D-glutamate + ATP = UDP-N-acetyl-alpha-D-muramoyl-L-alanyl-D-glutamate + ADP + phosphate + H(+). It participates in cell wall biogenesis; peptidoglycan biosynthesis. Functionally, cell wall formation. Catalyzes the addition of glutamate to the nucleotide precursor UDP-N-acetylmuramoyl-L-alanine (UMA). In Lactobacillus delbrueckii subsp. bulgaricus (strain ATCC 11842 / DSM 20081 / BCRC 10696 / JCM 1002 / NBRC 13953 / NCIMB 11778 / NCTC 12712 / WDCM 00102 / Lb 14), this protein is UDP-N-acetylmuramoylalanine--D-glutamate ligase.